Here is a 1099-residue protein sequence, read N- to C-terminus: Solute carrier family 12 member 1 (1099 aa).

At 1-177 (MSLNNSSNVF…EDDQAGVVKF (177 aa)) the chain is on the cytoplasmic side. Residues 20–23 (RFQV) carry the RFXV motif motif. The tract at residues 31–53 (ESSAAADDNTDPPHYEETSFGDE) is disordered. S61 carries the phosphoserine modification. A Phosphoserine; by OXSR1 and STK39 modification is found at S91. The residue at position 95 (T95) is a Phosphothreonine. 2 positions are modified to phosphothreonine; by OXSR1 and STK39: T100 and T105. A Phosphothreonine modification is found at T118. S120 is subject to Phosphoserine. At S130 the chain carries Phosphoserine; by AMPK. Position 148 is a phosphoserine (S148). The chain crosses the membrane as a helical span at residues 178-198 (GWVKGVLVRCMLNIWGVMLFI). Residues 199–201 (RLS) are Extracellular-facing. A helical transmembrane segment spans residues 202 to 222 (WIVGEAGIGLGVLIILLSTMV). The Cytoplasmic segment spans residues 223–259 (TSITGLSTSAIATNGFVRGGGAYYLISRSLGPEFGGS). A helical membrane pass occupies residues 260–280 (IGLIFAFANAVAVAMYVVGFA). The Extracellular portion of the chain corresponds to 281-302 (ETVVDLLKESDSMMVDPTNDIR). The chain crosses the membrane as a helical span at residues 303–323 (IIGSITVVILLGISVAGMEWE). Residues 324-327 (AKAQ) lie on the Cytoplasmic side of the membrane. The chain crosses the membrane as a helical span at residues 328-348 (VILLVILLIAIANFFIGTVIP). Topologically, residues 349 to 379 (SNNEKKSRGFFNYQASIFAENFGPRFTKGEG) are extracellular. The chain crosses the membrane as a helical span at residues 380–400 (FFSVFAIFFPAATGILAGANI). The Cytoplasmic portion of the chain corresponds to 401–417 (SGDLEDPQDAIPRGTML). The chain crosses the membrane as a helical span at residues 418–438 (AIFITTVAYLGVAICVGACVV). Residues 439–550 (RDATGNMNDT…NNEPLRGYIL (112 aa)) are Extracellular-facing. N-linked (GlcNAc...) asparagine glycosylation is found at N446 and N456. The next 2 membrane-spanning stretches (helical) occupy residues 551–571 (TFLI…APII) and 572–592 (SNFF…ASYA). Topologically, residues 593-609 (KSPGWRPAYGIYNMWVS) are extracellular. Residues 610 to 630 (LFGAVLCCAVMFVINWWAAVI) traverse the membrane as a helical segment. The Cytoplasmic segment spans residues 631–1099 (TYVIEFFLYV…NHKNVLTFYS (469 aa)).

The protein belongs to the SLC12A transporter family. In terms of assembly, when phosphorylated, interacts with PPP3CB. In terms of processing, phosphorylated at Ser-91, Thr-100 and Thr-105 by OXSR1/OSR1 and STK39/SPAK downstream of WNK kinases (WNK1, WNK2, WNK3 or WNK4), promoting its activity. Kidney; localizes to the thick ascending limbs (at protein level).

Its subcellular location is the apical cell membrane. It carries out the reaction K(+)(out) + 2 chloride(out) + Na(+)(out) = K(+)(in) + 2 chloride(in) + Na(+)(in). With respect to regulation, activated following phosphorylation by OXSR1/OSR1 and STK39/SPAK downstream of WNK kinases (WNK1, WNK2, WNK3 or WNK4). Functionally, renal sodium, potassium and chloride ion cotransporter that mediates the transepithelial NaCl reabsorption in the thick ascending limb and plays an essential role in the urinary concentration and volume regulation. Electrically silent transporter system. The protein is Solute carrier family 12 member 1 (SLC12A1) of Homo sapiens (Human).